The following is a 567-amino-acid chain: MKISRQAYADMYGPTTGDRIRLGDTELWVEIEHDHTHYGEEVKFGGGKVIRDGMGQSQRCDDAVMDTVITNAVIIDWWGIIKADVGLKNGRIAAIGKSGNPDTQPDIDIIIGPGTEIIAGEGQILTAGGVDTHVHYICPQQVDEALMSGLTTMIGGGTGPATGSVATTHTPGPWHLGKMMQAVDDLPINIGFLGKGSASTPEALEQQIKAGAMSLKIHEDWGAAPASISNALDVADRYDIQVAIHADSLNESGFVQDTLEAFKDRCIHTYHTEGAGGGHAPDIIVACAMPNVLPSSTNPTRPYTINTVDEHLDMLMGCHHLDPNIPEDVAFADSRIRRETIAAEDILHDMGVISMMSSDSQAMGRIGEVVCRTWQTAHKMRVQRGLLPEDEALGADNFRAKRYIAKYTINPAITHGISHEVGSIEVGKFADLVLWKPPFFGVKPSIILKGGMIAGAAMGDPNAAISTPQPVHYRRMFGALGKAVSATRMTFVSQAAMNTGLEEKLGLKSQLVACKNVRQVRKCDMKLNDACPVLTVDPQTYEVHADGVLLTCEPATELPLAQRYHLF.

The Urease domain maps to 128–567 (GGVDTHVHYI…LPLAQRYHLF (440 aa)). Ni(2+) is bound by residues histidine 133, histidine 135, and lysine 216. Lysine 216 bears the N6-carboxylysine mark. Histidine 218 provides a ligand contact to substrate. Residues histidine 245 and histidine 271 each contribute to the Ni(2+) site. The Proton donor role is filled by histidine 319. Residue aspartate 359 coordinates Ni(2+).

This sequence belongs to the metallo-dependent hydrolases superfamily. Urease alpha subunit family. In terms of assembly, heterotrimer of UreA (gamma), UreB (beta) and UreC (alpha) subunits. Three heterotrimers associate to form the active enzyme. It depends on Ni cation as a cofactor. Post-translationally, carboxylation allows a single lysine to coordinate two nickel ions.

It localises to the cytoplasm. It catalyses the reaction urea + 2 H2O + H(+) = hydrogencarbonate + 2 NH4(+). Its pathway is nitrogen metabolism; urea degradation; CO(2) and NH(3) from urea (urease route): step 1/1. The sequence is that of Urease subunit alpha from Pseudoalteromonas translucida (strain TAC 125).